We begin with the raw amino-acid sequence, 387 residues long: 3-ketoacyl-CoA thiolase (387 aa).

Residue Cys-91 is the Acyl-thioester intermediate of the active site. Active-site proton acceptor residues include His-343 and Cys-373.

Belongs to the thiolase-like superfamily. Thiolase family. As to quaternary structure, heterotetramer of two alpha chains (FadB) and two beta chains (FadA).

The protein resides in the cytoplasm. The catalysed reaction is an acyl-CoA + acetyl-CoA = a 3-oxoacyl-CoA + CoA. It participates in lipid metabolism; fatty acid beta-oxidation. Its function is as follows. Catalyzes the final step of fatty acid oxidation in which acetyl-CoA is released and the CoA ester of a fatty acid two carbons shorter is formed. This chain is 3-ketoacyl-CoA thiolase, found in Shewanella sp. (strain MR-7).